Consider the following 166-residue polypeptide: Putative protein PTGES3L (166 aa).

The CS domain maps to 46-154 (RQHARTLWYD…RPPPAMDDLD (109 aa)). The disordered stretch occupies residues 142-166 (STKRPPPAMDDLDDDSDSADDATSN). Residues 151–166 (DDLDDDSDSADDATSN) show a composition bias toward acidic residues.

The protein belongs to the p23/wos2 family.

The polypeptide is Putative protein PTGES3L (Homo sapiens (Human)).